We begin with the raw amino-acid sequence, 337 residues long: Alcohol dehydrogenase 1 (337 aa).

The Zn(2+) site is built by C37, H58, C89, C92, C95, C103, and C145.

The protein belongs to the zinc-containing alcohol dehydrogenase family. Multimeric (with different ratios of monomers). Zn(2+) is required as a cofactor.

The catalysed reaction is a primary alcohol + NAD(+) = an aldehyde + NADH + H(+). It catalyses the reaction a secondary alcohol + NAD(+) = a ketone + NADH + H(+). Its pathway is alcohol metabolism; ethanol biosynthesis via fermentation pathway. Its activity is regulated as follows. Inhibited by ethanol. In Zymomonas mobilis subsp. mobilis (strain ATCC 31821 / ZM4 / CP4), this protein is Alcohol dehydrogenase 1 (adhA).